A 439-amino-acid polypeptide reads, in one-letter code: Xylose isomerase (439 aa).

Residues His101 and Asp104 contribute to the active site. The Mg(2+) site is built by Glu232, Glu268, His271, Asp296, Asp307, Asp309, and Asp339.

This sequence belongs to the xylose isomerase family. As to quaternary structure, homotetramer. The cofactor is Mg(2+).

It localises to the cytoplasm. It carries out the reaction alpha-D-xylose = alpha-D-xylulofuranose. The protein is Xylose isomerase (xylA) of Thermoanaerobacterium saccharolyticum.